A 70-amino-acid polypeptide reads, in one-letter code: U-actitoxin-Avd11a (70 aa).

The region spanning 36–70 is the ShKT domain; that stretch reads CNDYKSSSYCRSVGSRNECGIHKYRMYCRKTCGSC. 3 disulfide bridges follow: Cys-36–Cys-70, Cys-45–Cys-63, and Cys-54–Cys-67. The interval 58–59 is crucial for binding to potassium channels; sequence KY.

Belongs to the sea anemone type 1 potassium channel toxin family. Type 1b subfamily.

It is found in the secreted. Its subcellular location is the nematocyst. In terms of biological role, inhibits voltage-gated potassium channels (Kv1/KCNA). The polypeptide is U-actitoxin-Avd11a (Anemonia viridis (Snakelocks anemone)).